Consider the following 814-residue polypeptide: Plakophilin-2 (814 aa).

Residues 1–329 (MAIPGSLGEC…MTLERAVNML (329 aa)) are required for binding to single-stranded DNA. A Phosphoserine modification is found at S44. At R46 the chain carries Omega-N-methylarginine. S82 and S130 each carry phosphoserine. ARM repeat units lie at residues 200-240 (TCQH…SIKG), 309-352 (CDCL…ESFQ), 354-393 (SEAR…NLVF), 503-549 (PDGR…NLSY), 604-644 (PRGI…NLTA), 652-691 (SVAR…NLSR), 696-737 (QNEI…NLMQ), and 740-782 (YQNA…SLWA).

The protein belongs to the beta-catenin family. As to quaternary structure, interacts with DSC2. Interacts with JUP. Interacts with KRT5/CK5, KRT8/CK8, KRT14/CK14, KRT18/CK18 and VIM. Interacts (via N-terminus) with MARK3/C-TAK1. Interacts with DSP. Interacts with DSG1, DSG2 and DSG3. Interacts (via N-terminus) with CTNNB1. Interacts with CDH1. Interacts with the RNA polymerase III (Pol III) complex proteins POLR3A/RPC155, POLR3F/RPC39 and POLR3C/RPC82. Interacts with CTNNA3. Interacts (via N-terminus) with SCN5A/Nav1.5. Interacts with ANK3/ANKG and GJA1/CX43. As to expression, expressed in the heart (at protein level).

It is found in the nucleus. Its subcellular location is the cell junction. It localises to the desmosome. The protein localises to the cytoplasm. In terms of biological role, a component of desmosome cell-cell junctions which are required for positive regulation of cellular adhesion. Regulates focal adhesion turnover resulting in changes in focal adhesion size, cell adhesion and cell spreading, potentially via transcriptional modulation of beta-integrins. Required to maintain gingival epithelial barrier function. Important component of the desmosome that is also required for localization of desmosome component proteins such as DSC2, DSG2 and JUP to the desmosome cell-cell junction. Required for the formation of desmosome cell junctions in cardiomyocytes, thereby required for the correct formation of the heart, specifically trabeculation and formation of the atria walls. Loss of desmosome cell junctions leads to mis-localization of DSP and DSG2 resulting in disruption of cell-cell adhesion and disordered intermediate filaments. Modulates profibrotic gene expression in cardiomyocytes via regulation of DSP expression and subsequent activation of downstream TGFB1 and MAPK14/p38 MAPK signaling. Required for cardiac sodium current propagation and electrical synchrony in cardiac myocytes, via ANK3 stabilization and modulation of SCN5A/Nav1.5 localization to cell-cell junctions. Required for mitochondrial function, nuclear envelope integrity and positive regulation of SIRT3 transcription via maintaining DES localization at its nuclear envelope and cell tip anchoring points, and thereby preserving regulation of the transcriptional program. Maintenance of nuclear envelope integrity protects against DNA damage and transcriptional dysregulation of genes, especially those involved in the electron transport chain, thereby preserving mitochondrial function and protecting against superoxide radical anion generation. Binds single-stranded DNA (ssDNA). May regulate the localization of GJA1 to gap junctions in intercalated disks of the heart. This is Plakophilin-2 from Rattus norvegicus (Rat).